The following is a 316-amino-acid chain: DNA-directed RNA polymerase III subunit RPC6 (316 aa).

A2 carries the N-acetylalanine modification. Residues K5 and K7 each participate in a glycyl lysine isopeptide (Lys-Gly) (interchain with G-Cter in SUMO2) cross-link. Residues C287, C290, C296, and C307 each coordinate [4Fe-4S] cluster.

This sequence belongs to the eukaryotic RPC34/RPC39 RNA polymerase subunit family. As to quaternary structure, component of the RNA polymerase III complex consisting of 17 subunits: a ten-subunit horseshoe-shaped catalytic core composed of POLR3A/RPC1, POLR3B/RPC2, POLR1C/RPAC1, POLR1D/RPAC2, POLR3K/RPC10, POLR2E/RPABC1, POLR2F/RPABC2, POLR2H/RPABC3, POLR2K/RPABC4 and POLR2L/RPABC5; a mobile stalk composed of two subunits POLR3H/RPC8 and CRCP/RPC9, protruding from the core and functioning primarily in transcription initiation; and additional subunits homologous to general transcription factors of the RNA polymerase II machinery, POLR3C/RPC3-POLR3F/RPC6-POLR3G/RPC7 heterotrimer required for transcription initiation and POLR3D/RPC4-POLR3E/RPC5 heterodimer involved in both transcription initiation and termination. Directly interacts with POLR3C. Interacts with TBP and TFIIIB90 and GTF3C4. Interacts with MAF1. As part of the RNA polymerase III complex, interacts with PKP2.

The protein localises to the nucleus. Its function is as follows. DNA-dependent RNA polymerase catalyzes the transcription of DNA into RNA using the four ribonucleoside triphosphates as substrates. Specific peripheric component of RNA polymerase III (Pol III) which synthesizes small non-coding RNAs including 5S rRNA, snRNAs, tRNAs and miRNAs from at least 500 distinct genomic loci. Part of POLR3C/RPC3-POLR3F/RPC6-POLR3G/RPC7 heterotrimer that coordinates the dynamics of Pol III stalk and clamp modules during the transition from apo to elongation state. Pol III plays a key role in sensing and limiting infection by intracellular bacteria and DNA viruses, including varicella zoster virus. Acts as a nuclear and cytosolic DNA sensor detecting AT-rich DNA, involved in innate immune response. Can sense non-self dsDNA that serves as template for transcription into dsRNA. The non-self RNA polymerase III transcripts, such as Epstein-Barr virus-encoded RNAs (EBERs) induce type I interferon and NF-kappa-B through the RIG-I pathway. Preferentially binds double-stranded DNA (dsDNA). This is DNA-directed RNA polymerase III subunit RPC6 (POLR3F) from Bos taurus (Bovine).